We begin with the raw amino-acid sequence, 313 residues long: MEPQNHTSASEFILLGLSEKPDHDPVLFSLFLCMYMITVVGNLLIILAISFDSHLHTPMYFFLANLSLVDFCLATNTVPKMLVNIQTRNKSISYPCCLTQMYFFHFFGIMDSVLIAVMAYDRFVAICHPLHYSTIMSPRLCGLLVGVPWVYSCFISLTHILLMARLVFCGKNELPHYFCDLTPLLRLSCTDTTVNKIFVLIVAGMVIATPFVCILASYARIIVAIMKVPSAGGRKKAFSTCSSHLSVVALFYGTTIGVYLCPSSVRTAVKEKASAVMYTAVTPMLNPFIYSLRNRDLKGALKKIINRKISTSS.

The Extracellular portion of the chain corresponds to 1–25 (MEPQNHTSASEFILLGLSEKPDHDP). N-linked (GlcNAc...) asparagine glycosylation is present at asparagine 5. The chain crosses the membrane as a helical span at residues 26–46 (VLFSLFLCMYMITVVGNLLII). Topologically, residues 47-54 (LAISFDSH) are cytoplasmic. Residues 55 to 75 (LHTPMYFFLANLSLVDFCLAT) form a helical membrane-spanning segment. Residues 76-97 (NTVPKMLVNIQTRNKSISYPCC) lie on the Extracellular side of the membrane. Asparagine 89 is a glycosylation site (N-linked (GlcNAc...) asparagine). A disulfide bridge links cysteine 97 with cysteine 179. Residues 98 to 118 (LTQMYFFHFFGIMDSVLIAVM) traverse the membrane as a helical segment. The Cytoplasmic segment spans residues 119-142 (AYDRFVAICHPLHYSTIMSPRLCG). A helical membrane pass occupies residues 143–163 (LLVGVPWVYSCFISLTHILLM). Residues 164 to 196 (ARLVFCGKNELPHYFCDLTPLLRLSCTDTTVNK) are Extracellular-facing. The chain crosses the membrane as a helical span at residues 197–217 (IFVLIVAGMVIATPFVCILAS). At 218–244 (YARIIVAIMKVPSAGGRKKAFSTCSSH) the chain is on the cytoplasmic side. A helical transmembrane segment spans residues 245-265 (LSVVALFYGTTIGVYLCPSSV). Over 266–274 (RTAVKEKAS) the chain is Extracellular. Residues 275-292 (AVMYTAVTPMLNPFIYSL) traverse the membrane as a helical segment. Residues 293-313 (RNRDLKGALKKIINRKISTSS) are Cytoplasmic-facing.

It belongs to the G-protein coupled receptor 1 family. As to expression, expressed in testis.

It localises to the cell membrane. Its function is as follows. Odorant receptor. This chain is Olfactory receptor 1M1, found in Mus musculus (Mouse).